The primary structure comprises 63 residues: Large ribosomal subunit protein uL29 (63 aa).

Belongs to the universal ribosomal protein uL29 family.

The sequence is that of Large ribosomal subunit protein uL29 from Azotobacter vinelandii (strain DJ / ATCC BAA-1303).